A 350-amino-acid polypeptide reads, in one-letter code: Tsukushi (350 aa).

The N-terminal stretch at 1 to 17 (MAPSWLFLLFIPGMVGS) is a signal peptide. An LRRNT domain is found at 18–59 (SRSCFPGCQCIVDNFGLFHSFSLTKVDCSGVGPHVVPVSIPL). LRR repeat units follow at residues 60–81 (DTSYLDLSANGIKRINESVLSG), 86–107 (TLINLNLSHNQIVRISFSTFSK), 110–131 (YLESLDLSHNLLETLPDGSFLY), 133–154 (RLTELDLSSNKLLEVGIGAFTL), 159–180 (RSMTINLGNNNIRSIHRGAERP), 183–203 (NIHSLTLSGNDLLSVPDLHGI), 204–225 (PLRHLDLDRNPLAKIEKESFLG), 228–250 (GLTHLSLSDLPNLREVSPYSFKT), 253–275 (SLLDLDLSSNPQLKSLSSDMFFG), and 278–299 (SLQELNLAYSGVAALPKDIMLN). Residues Asn-75 and Asn-91 are each glycosylated (N-linked (GlcNAc...) asparagine).

As to quaternary structure, interacts with bmp4. Interacts with dll1 (via extracellular region). Interacts with fgf8; inhibits fgf8 signaling. Interacts with nodal2/Xnr2; enhances nodal2 activity.

The protein resides in the secreted. Contributes to various developmental events through its interactions with multiple signaling pathways. Dorsalizing factor which functions as an inhibitor of bone morphogenetic proteins (BMP) during gastrulation. Promotes dll1-dependent activation of Notch signaling and is required for neural crest formation. Induces endoderm and dorsal mesoderm formation by enhancing nodal2/Xnr2 activity while inhibiting ventrolateral mesoderm formation through inhibition of fgf8. The protein is Tsukushi (tsku) of Xenopus tropicalis (Western clawed frog).